The chain runs to 376 residues: Chorismate synthase (376 aa).

NADP(+) contacts are provided by Arg39 and Arg45. Residues 115-117, Gly276, 291-295, and Arg317 each bind FMN; these read RSS and KPIPT.

Belongs to the chorismate synthase family. In terms of assembly, homotetramer. Requires FMNH2 as cofactor.

It catalyses the reaction 5-O-(1-carboxyvinyl)-3-phosphoshikimate = chorismate + phosphate. Its pathway is metabolic intermediate biosynthesis; chorismate biosynthesis; chorismate from D-erythrose 4-phosphate and phosphoenolpyruvate: step 7/7. In terms of biological role, catalyzes the anti-1,4-elimination of the C-3 phosphate and the C-6 proR hydrogen from 5-enolpyruvylshikimate-3-phosphate (EPSP) to yield chorismate, which is the branch point compound that serves as the starting substrate for the three terminal pathways of aromatic amino acid biosynthesis. This reaction introduces a second double bond into the aromatic ring system. This Thermotoga sp. (strain RQ2) protein is Chorismate synthase.